Here is a 408-residue protein sequence, read N- to C-terminus: MWAFPELPMPLLVNLIGSLMGFVATVTLIPAFRGHFIAARLCGQDLNKSSREQIPESQGVISGAVFLIILFCFIPFPFLNCFVEQQCKAFPHHEFVALIGALLAICCMIFLGFADDVLNLRWRHKLLLPTAASLPLLMVYFTNFGNTTIVVPKPLRPILGLHLDLGILYYVYMGLLAVFCTNAINILAGINGLEAGQSLVISASIIVFNLVELDGDYRDDHIFSLYFMIPFFFTTLGLLYHNWYPSRVFVGDTFCYFAGMTFAVVGILGHFSKTMLLFFMPQVFNFLYSLPQLLHIIPCPRHRMPRLNTKTGKLEMSYSKFKTKSLSFLGTFILKVAENLGLLTVRHSEDEDGAFTECNNMTLINLLLKVFGPMHERNLTLLLLLLQVVGSAVTFSIRYQLVRLFYDV.

The Lumenal portion of the chain corresponds to 1–10 (MWAFPELPMP). The chain crosses the membrane as a helical span at residues 11–38 (LLVNLIGSLMGFVATVTLIPAFRGHFIA). The Cytoplasmic portion of the chain corresponds to 39–58 (ARLCGQDLNKSSREQIPESQ). UDP-N-acetyl-alpha-D-glucosamine-binding positions include 44–46 (QDL) and Glu56. The helical transmembrane segment at 59 to 78 (GVISGAVFLIILFCFIPFPF) threads the bilayer. Over 79 to 91 (LNCFVEQQCKAFP) the chain is Lumenal. Residues 92–118 (HHEFVALIGALLAICCMIFLGFADDVL) traverse the membrane as a helical segment. At 119-121 (NLR) the chain is on the cytoplasmic side. The helical transmembrane segment at 122 to 143 (WRHKLLLPTAASLPLLMVYFTN) threads the bilayer. Lys125 serves as a coordination point for dolichyl phosphate. At 144 to 166 (FGNTTIVVPKPLRPILGLHLDLG) the chain is on the lumenal side. N-linked (GlcNAc...) asparagine glycosylation is present at Asn146. Residues 167 to 186 (ILYYVYMGLLAVFCTNAINI) form a helical membrane-spanning segment. Position 178 to 186 (178 to 186 (VFCTNAINI)) interacts with dolichyl phosphate. Mg(2+) is bound at residue Asn185. Residues 187-192 (LAGING) lie on the Cytoplasmic side of the membrane. Residue Asn191 coordinates UDP-N-acetyl-alpha-D-glucosamine. Residues 193–213 (LEAGQSLVISASIIVFNLVEL) traverse the membrane as a helical segment. The Lumenal portion of the chain corresponds to 214–218 (DGDYR). The chain crosses the membrane as a helical span at residues 219–242 (DDHIFSLYFMIPFFFTTLGLLYHN). Residues 243 to 250 (WYPSRVFV) lie on the Cytoplasmic side of the membrane. The helical transmembrane segment at 251 to 269 (GDTFCYFAGMTFAVVGILG) threads the bilayer. Asp252 contributes to the Mg(2+) binding site. The Lumenal segment spans residues 270–271 (HF). The chain crosses the membrane as a helical span at residues 272–293 (SKTMLLFFMPQVFNFLYSLPQL). Residues 294–375 (LHIIPCPRHR…LLLKVFGPMH (82 aa)) lie on the Cytoplasmic side of the membrane. UDP-N-acetyl-alpha-D-glucosamine is bound at residue 301-303 (RHR). The chain crosses the membrane as a helical span at residues 376–400 (ERNLTLLLLLLQVVGSAVTFSIRYQ). Topologically, residues 401–408 (LVRLFYDV) are lumenal.

The protein belongs to the glycosyltransferase 4 family. In terms of assembly, homodimer. Mg(2+) serves as cofactor.

The protein localises to the endoplasmic reticulum membrane. The catalysed reaction is a di-trans,poly-cis-dolichyl phosphate + UDP-N-acetyl-alpha-D-glucosamine = an N-acetyl-alpha-D-glucosaminyl-diphospho-di-trans,poly-cis-dolichol + UMP. It functions in the pathway protein modification; protein glycosylation. Its activity is regulated as follows. Inhibited by natural nucleoside antibiotic tunicamycin, which acts as a structural analog and competitor of UDP-GlcNAc. Activated by Man-P-Dol. Activated by manganese. Inhibited by diumycin. In terms of biological role, UDP-N-acetylglucosamine--dolichyl-phosphate N-acetylglucosaminephosphotransferase that operates in the biosynthetic pathway of dolichol-linked oligosaccharides, the glycan precursors employed in protein asparagine (N)-glycosylation. The assembly of dolichol-linked oligosaccharides begins on the cytosolic side of the endoplasmic reticulum membrane and finishes in its lumen. The sequential addition of sugars to dolichol pyrophosphate produces dolichol-linked oligosaccharides containing fourteen sugars, including two GlcNAcs, nine mannoses and three glucoses. Once assembled, the oligosaccharide is transferred from the lipid to nascent proteins by oligosaccharyltransferases. Catalyzes the initial step of dolichol-linked oligosaccharide biosynthesis, transfering GlcNAc-1-P from cytosolic UDP-GlcNAc onto the carrier lipid dolichyl phosphate (P-dolichol), yielding GlcNAc-P-P-dolichol embedded in the cytoplasmic leaflet of the endoplasmic reticulum membrane. This is UDP-N-acetylglucosamine--dolichyl-phosphate N-acetylglucosaminephosphotransferase from Bos taurus (Bovine).